Consider the following 127-residue polypeptide: I-Kappa-B like protein J1 (127 aa).

ANK repeat units lie at residues 43–76 (HGNTCLHIATEEHRGRQAIWLIEKLVEYGADLDE) and 81–111 (DGDTVLHMAVKKGDYKLATWMCQQLSMRFGS).

It belongs to the polydnaviridae I-Kappa-B-like protein family.

In terms of biological role, suppresses the host immune response through NF-kappa-B inactivation. Possesses ankyrin repeat domains required for NF-kappa-B binding but lacks the regulatory regions required for dissociation from NF-kappa-B and degradation. Therefore, prevents host NF-kappa-B release and subsequent activation. This Microplitis demolitor (Parasitoid wasp) protein is I-Kappa-B like protein J1 (J2).